A 339-amino-acid polypeptide reads, in one-letter code: UDP-galactose transporter homolog 1 (339 aa).

The next 9 membrane-spanning stretches (helical) occupy residues 5–25 (ILKHVFAVGGIYCSFLTWGLL), 43–63 (VPYIVALVQATIAMICGLIYI), 91–111 (AISAPLAAYSLSYVDFLTYML), 138–158 (LVVLLVTVGITIFTLDGHKPS), 171–191 (SSLIGFVLLGSSLFLDGLTNA), 208–228 (HLMFALNFFLIVWNVIYMVLV), 246–268 (ISRYLLAYACCGAIGQCFIFYTL), 273–295 (SLVLVMVTVTRKMFSMILSIIVY), and 301–321 (LWQWVGIVIVFTGVVCESMGK).

Belongs to the nucleotide-sugar transporter family. SLC35B subfamily.

The protein localises to the endoplasmic reticulum membrane. Functionally, may be involved in specific transport of UDP-Gal from the cytosol to the Golgi lumen. Involved in the maintenance of optimal conditions for the folding of secretory pathway proteins in the endoplasmic reticulum. In Kluyveromyces lactis (strain ATCC 8585 / CBS 2359 / DSM 70799 / NBRC 1267 / NRRL Y-1140 / WM37) (Yeast), this protein is UDP-galactose transporter homolog 1 (HUT1).